Here is a 291-residue protein sequence, read N- to C-terminus: m-AAA protease-interacting protein 1, mitochondrial (291 aa).

The transit peptide at 1 to 96 (MALAARLLPQ…SFPACPQRSY (96 aa)) directs the protein to the mitochondrion.

In terms of assembly, interacts with AFG3L2. Interacts with SPG7. Interacts with SMDT1/EMRE (via the N-terminal transit peptide); interaction is direct and takes place before maturation of SMDT1/EMRE.

The protein resides in the mitochondrion matrix. Functionally, promotes sorting of SMDT1/EMRE in mitochondria by ensuring its maturation. Interacts with the transit peptide region of SMDT1/EMRE precursor protein in the mitochondrial matrix, leading to protect it against protein degradation by YME1L1, thereby ensuring SMDT1/EMRE maturation by the mitochondrial processing peptidase (PMPCA and PMPCB). The sequence is that of m-AAA protease-interacting protein 1, mitochondrial from Homo sapiens (Human).